A 329-amino-acid polypeptide reads, in one-letter code: Sex comb on midleg-like protein 1 (329 aa).

2 positions are modified to phosphoserine: S138 and S238. The interval 138 to 157 (SPTLPVSRRENNSPSNLPRP) is disordered. The SAM domain maps to 258 to 325 (WSVEAVVLFL…YYIDRLKQGK (68 aa)).

It belongs to the SCM family.

Its subcellular location is the nucleus. In terms of biological role, putative Polycomb group (PcG) protein. PcG proteins act by forming multiprotein complexes, which are required to maintain the transcriptionally repressive state of homeotic genes throughout development. May be involved in spermatogenesis during sexual maturation. This chain is Sex comb on midleg-like protein 1 (SCML1), found in Gorilla gorilla gorilla (Western lowland gorilla).